A 405-amino-acid polypeptide reads, in one-letter code: Tryptophan synthase beta chain (405 aa).

Residue lysine 98 is modified to N6-(pyridoxal phosphate)lysine.

It belongs to the TrpB family. In terms of assembly, tetramer of two alpha and two beta chains. The cofactor is pyridoxal 5'-phosphate.

The enzyme catalyses (1S,2R)-1-C-(indol-3-yl)glycerol 3-phosphate + L-serine = D-glyceraldehyde 3-phosphate + L-tryptophan + H2O. It functions in the pathway amino-acid biosynthesis; L-tryptophan biosynthesis; L-tryptophan from chorismate: step 5/5. Functionally, the beta subunit is responsible for the synthesis of L-tryptophan from indole and L-serine. This is Tryptophan synthase beta chain from Xylella fastidiosa (strain M12).